The following is a 160-amino-acid chain: Phosphopantetheine adenylyltransferase (160 aa).

Ser-9 contributes to the substrate binding site. ATP is bound by residues 9–10 (SL) and His-17. Substrate contacts are provided by Lys-41, Leu-74, and Lys-88. Residues 89–91 (GIR), Glu-99, and 123–129 (YLHLSST) contribute to the ATP site.

The protein belongs to the bacterial CoaD family. As to quaternary structure, homohexamer. Mg(2+) is required as a cofactor.

The protein localises to the cytoplasm. It carries out the reaction (R)-4'-phosphopantetheine + ATP + H(+) = 3'-dephospho-CoA + diphosphate. The protein operates within cofactor biosynthesis; coenzyme A biosynthesis; CoA from (R)-pantothenate: step 4/5. Reversibly transfers an adenylyl group from ATP to 4'-phosphopantetheine, yielding dephospho-CoA (dPCoA) and pyrophosphate. This chain is Phosphopantetheine adenylyltransferase, found in Renibacterium salmoninarum (strain ATCC 33209 / DSM 20767 / JCM 11484 / NBRC 15589 / NCIMB 2235).